A 718-amino-acid polypeptide reads, in one-letter code: Methionine--tRNA ligase (718 aa).

A 'HIGH' region motif is present at residues 27-37 (PYANGQIHIGH). The Zn(2+) site is built by Cys-158, Cys-161, Cys-171, and Cys-174. The short motif at 348–352 (KMSKS) is the 'KMSKS' region element. An ATP-binding site is contributed by Lys-351. Residues 612–718 (DFAKIDLRIA…SGAKPGMRVK (107 aa)) enclose the tRNA-binding domain.

The protein belongs to the class-I aminoacyl-tRNA synthetase family. MetG type 1 subfamily. In terms of assembly, homodimer. The cofactor is Zn(2+).

Its subcellular location is the cytoplasm. The catalysed reaction is tRNA(Met) + L-methionine + ATP = L-methionyl-tRNA(Met) + AMP + diphosphate. In terms of biological role, is required not only for elongation of protein synthesis but also for the initiation of all mRNA translation through initiator tRNA(fMet) aminoacylation. The chain is Methionine--tRNA ligase from Burkholderia thailandensis (strain ATCC 700388 / DSM 13276 / CCUG 48851 / CIP 106301 / E264).